An 88-amino-acid polypeptide reads, in one-letter code: MGTARFLRAVLLLSVLLMVTFPALLSAEHHDGRVGICRLPSDSGDCLRFFEMWYFDGTTCTKFVYGGYGGNNNRFPTEKACMKRCAKA.

Residues 1 to 27 (MGTARFLRAVLLLSVLLMVTFPALLSA) form the signal peptide. Positions 28–33 (EHHDGR) are excised as a propeptide. A BPTI/Kunitz inhibitor domain is found at 37-85 (CRLPSDSGDCLRFFEMWYFDGTTCTKFVYGGYGGNNNRFPTEKACMKRC). Cystine bridges form between C37-C85 and C60-C81.

Belongs to the venom Kunitz-type family. 03 (sub-Kunitz) subfamily. In terms of tissue distribution, expressed by the venom gland.

The protein localises to the secreted. Its function is as follows. Serine protease inhibitor that inhibits trypsin at a molar ratio of 1:1. The sequence is that of Kunitz-type U15-theraphotoxin-Hhn1f from Cyriopagopus hainanus (Chinese bird spider).